The sequence spans 314 residues: Zinc transporter ZIP3 (314 aa).

Over 1 to 3 (MNL) the chain is Extracellular. A helical membrane pass occupies residues 4-24 (IFAKVLCLLAILVLMMLGSLI). The Cytoplasmic segment spans residues 25–41 (PVKISEADFDKSSRSRK). A helical transmembrane segment spans residues 42–62 (ILSLSNSFAGGVFLATCFNAL). At 63–84 (LPAVREKFFDLLKIGNISTDYP) the chain is on the extracellular side. The helical transmembrane segment at 85 to 105 (LAETIMMVGFFLTVFVEQTVM) threads the bilayer. Residues 106–169 (TFRKEKPSFI…KELSSSSPIR (64 aa)) are Cytoplasmic-facing. The chain crosses the membrane as a helical span at residues 170–190 (LFSLVFALSAHSVFEGLALGL). Over 191-196 (QEDGNK) the chain is Extracellular. The chain crosses the membrane as a helical span at residues 197-217 (LLSLFIGVVIHETLVAMALGV). Over 218-229 (SMAKVNTHLKDA) the chain is Cytoplasmic. Residues 230 to 250 (IKMAVLVSTMIPIGIVVGMAI) traverse the membrane as a helical segment. The Extracellular segment spans residues 251–262 (QSAQNMASSIAS). Residues 263–283 (ALLQGIAGGTFIFVTFFEILV) form a helical membrane-spanning segment. Topologically, residues 284 to 292 (KELEEKNDR) are cytoplasmic. Residues 293–313 (LLKVLFLVLGYTVLAVLVLFK) form a helical membrane-spanning segment. A topological domain (extracellular) is located at residue W314.

The protein belongs to the ZIP transporter (TC 2.A.5) family.

The protein resides in the cell membrane. It is found in the apical cell membrane. It carries out the reaction Zn(2+)(in) = Zn(2+)(out). In terms of biological role, transporter for the divalent cation Zn(2+). Mediates the influx of Zn(2+) into cells from extracellular space. In Xenopus tropicalis (Western clawed frog), this protein is Zinc transporter ZIP3 (slc39a3).